Here is a 363-residue protein sequence, read N- to C-terminus: Chalcone synthase B (363 aa).

Residue Cys-170 is part of the active site.

It belongs to the thiolase-like superfamily. Chalcone/stilbene synthases family.

It carries out the reaction (E)-4-coumaroyl-CoA + 3 malonyl-CoA + 3 H(+) = 2',4,4',6'-tetrahydroxychalcone + 3 CO2 + 4 CoA. Its pathway is secondary metabolite biosynthesis; flavonoid biosynthesis. Functionally, the primary product of this enzyme is 4,2',4',6'-tetrahydroxychalcone (also termed naringenin-chalcone or chalcone) which can under specific conditions spontaneously isomerize into naringenin. The chain is Chalcone synthase B (CHSB) from Ipomoea nil (Japanese morning glory).